The following is a 384-amino-acid chain: Chorismate synthase (384 aa).

Positions 40 and 46 each coordinate NADP(+). Residues arginine 127–serine 129, glutamine 247–alanine 248, alanine 292, lysine 307–threonine 311, and arginine 333 contribute to the FMN site.

The protein belongs to the chorismate synthase family. Homotetramer. Requires FMNH2 as cofactor.

The enzyme catalyses 5-O-(1-carboxyvinyl)-3-phosphoshikimate = chorismate + phosphate. The protein operates within metabolic intermediate biosynthesis; chorismate biosynthesis; chorismate from D-erythrose 4-phosphate and phosphoenolpyruvate: step 7/7. Catalyzes the anti-1,4-elimination of the C-3 phosphate and the C-6 proR hydrogen from 5-enolpyruvylshikimate-3-phosphate (EPSP) to yield chorismate, which is the branch point compound that serves as the starting substrate for the three terminal pathways of aromatic amino acid biosynthesis. This reaction introduces a second double bond into the aromatic ring system. The sequence is that of Chorismate synthase from Alkaliphilus oremlandii (strain OhILAs) (Clostridium oremlandii (strain OhILAs)).